Here is a 616-residue protein sequence, read N- to C-terminus: Dihydroxy-acid dehydratase (616 aa).

D81 contacts Mg(2+). Position 122 (C122) interacts with [2Fe-2S] cluster. Mg(2+) contacts are provided by D123 and K124. At K124 the chain carries N6-carboxylysine. Residue C195 coordinates [2Fe-2S] cluster. E491 lines the Mg(2+) pocket. S517 functions as the Proton acceptor in the catalytic mechanism.

The protein belongs to the IlvD/Edd family. As to quaternary structure, homodimer. The cofactor is [2Fe-2S] cluster. Mg(2+) serves as cofactor.

The enzyme catalyses (2R)-2,3-dihydroxy-3-methylbutanoate = 3-methyl-2-oxobutanoate + H2O. It catalyses the reaction (2R,3R)-2,3-dihydroxy-3-methylpentanoate = (S)-3-methyl-2-oxopentanoate + H2O. It participates in amino-acid biosynthesis; L-isoleucine biosynthesis; L-isoleucine from 2-oxobutanoate: step 3/4. Its pathway is amino-acid biosynthesis; L-valine biosynthesis; L-valine from pyruvate: step 3/4. Its function is as follows. Functions in the biosynthesis of branched-chain amino acids. Catalyzes the dehydration of (2R,3R)-2,3-dihydroxy-3-methylpentanoate (2,3-dihydroxy-3-methylvalerate) into 2-oxo-3-methylpentanoate (2-oxo-3-methylvalerate) and of (2R)-2,3-dihydroxy-3-methylbutanoate (2,3-dihydroxyisovalerate) into 2-oxo-3-methylbutanoate (2-oxoisovalerate), the penultimate precursor to L-isoleucine and L-valine, respectively. In Shewanella loihica (strain ATCC BAA-1088 / PV-4), this protein is Dihydroxy-acid dehydratase.